The sequence spans 208 residues: Endoplasmic reticulum vesicle protein 25 (208 aa).

The first 15 residues, 1-15 (MKFLLLLLLAPFISA), serve as a signal peptide directing secretion. The Lumenal portion of the chain corresponds to 16-177 (LRFDLKAESK…TNESTNERVR (162 aa)). Positions 28 to 118 (QMCIRDFVSE…KRAIELDIES (91 aa)) constitute a GOLD domain. The helical transmembrane segment at 178–198 (NFSVLVIIVLTSLGAWQVNYL) threads the bilayer. Residues 199–208 (KNYFKSKHII) are Cytoplasmic-facing.

This sequence belongs to the EMP24/GP25L family.

It is found in the endoplasmic reticulum membrane. The protein localises to the golgi apparatus membrane. Functionally, constituent of COPII-coated endoplasmic reticulum-derived transport vesicles. Required for efficient transport of a subset of secretory proteins to the Golgi. Facilitates retrograde transport from the Golgi to the endoplasmic reticulum. The sequence is that of Endoplasmic reticulum vesicle protein 25 (ERV25) from Candida glabrata (strain ATCC 2001 / BCRC 20586 / JCM 3761 / NBRC 0622 / NRRL Y-65 / CBS 138) (Yeast).